The sequence spans 138 residues: Nucleoside diphosphate kinase (138 aa).

ATP-binding residues include lysine 9, phenylalanine 57, arginine 85, threonine 91, arginine 102, and asparagine 112. Histidine 120 functions as the Pros-phosphohistidine intermediate in the catalytic mechanism.

It belongs to the NDK family. As to quaternary structure, homotetramer. Requires Mg(2+) as cofactor.

It localises to the cytoplasm. It carries out the reaction a 2'-deoxyribonucleoside 5'-diphosphate + ATP = a 2'-deoxyribonucleoside 5'-triphosphate + ADP. The enzyme catalyses a ribonucleoside 5'-diphosphate + ATP = a ribonucleoside 5'-triphosphate + ADP. Its function is as follows. Major role in the synthesis of nucleoside triphosphates other than ATP. The ATP gamma phosphate is transferred to the NDP beta phosphate via a ping-pong mechanism, using a phosphorylated active-site intermediate. In Streptococcus agalactiae serotype III (strain NEM316), this protein is Nucleoside diphosphate kinase.